Consider the following 761-residue polypeptide: Coenzyme PQQ synthesis protein F (761 aa).

Residue histidine 49 participates in Zn(2+) binding. Glutamate 52 functions as the Proton acceptor in the catalytic mechanism. 2 residues coordinate Zn(2+): histidine 53 and glutamate 130.

This sequence belongs to the peptidase M16 family. Zn(2+) serves as cofactor.

The protein operates within cofactor biosynthesis; pyrroloquinoline quinone biosynthesis. Its function is as follows. Required for coenzyme pyrroloquinoline quinone (PQQ) biosynthesis. It is thought that this protein is a protease that cleaves peptides bond in a small peptide (gene pqqA), providing the glutamate and tyrosine residues which are necessary for the synthesis of PQQ. This Klebsiella pneumoniae protein is Coenzyme PQQ synthesis protein F (pqqF).